A 115-amino-acid chain; its full sequence is Tyrosine-protein phosphatase 21 (115 aa).

The Tyrosine-protein phosphatase domain occupies Trp-1–Val-115. A substrate-binding site is contributed by Asp-83.

This sequence belongs to the protein-tyrosine phosphatase family.

The enzyme catalyses O-phospho-L-tyrosyl-[protein] + H2O = L-tyrosyl-[protein] + phosphate. The chain is Tyrosine-protein phosphatase 21 (STY-21) from Styela plicata (Wrinkled sea squirt).